The chain runs to 339 residues: Anthranilate phosphoribosyltransferase (339 aa).

5-phospho-alpha-D-ribose 1-diphosphate contacts are provided by residues Gly79, 82 to 83 (GD), Ser87, 89 to 92 (NIST), 107 to 115 (KHGNRAASS), and Ala119. Gly79 contacts anthranilate. Ser91 provides a ligand contact to Mg(2+). Position 110 (Asn110) interacts with anthranilate. An anthranilate-binding site is contributed by Arg165. Residues Asp224 and Glu225 each contribute to the Mg(2+) site.

This sequence belongs to the anthranilate phosphoribosyltransferase family. As to quaternary structure, homodimer. It depends on Mg(2+) as a cofactor.

It catalyses the reaction N-(5-phospho-beta-D-ribosyl)anthranilate + diphosphate = 5-phospho-alpha-D-ribose 1-diphosphate + anthranilate. It participates in amino-acid biosynthesis; L-tryptophan biosynthesis; L-tryptophan from chorismate: step 2/5. Catalyzes the transfer of the phosphoribosyl group of 5-phosphorylribose-1-pyrophosphate (PRPP) to anthranilate to yield N-(5'-phosphoribosyl)-anthranilate (PRA). This chain is Anthranilate phosphoribosyltransferase, found in Lactiplantibacillus plantarum (strain ATCC BAA-793 / NCIMB 8826 / WCFS1) (Lactobacillus plantarum).